A 226-amino-acid polypeptide reads, in one-letter code: Orotate phosphoribosyltransferase (226 aa).

Lys-29 contributes to the 5-phospho-alpha-D-ribose 1-diphosphate binding site. Position 37-38 (37-38) interacts with orotate; sequence FF. 5-phospho-alpha-D-ribose 1-diphosphate contacts are provided by residues 75-76, Arg-101, Lys-102, Lys-105, His-107, and 126-134; these read YK and DDVISAGTS. Positions 130 and 158 each coordinate orotate.

Belongs to the purine/pyrimidine phosphoribosyltransferase family. PyrE subfamily. Homodimer. Requires Mg(2+) as cofactor.

The catalysed reaction is orotidine 5'-phosphate + diphosphate = orotate + 5-phospho-alpha-D-ribose 1-diphosphate. It participates in pyrimidine metabolism; UMP biosynthesis via de novo pathway; UMP from orotate: step 1/2. Its function is as follows. Catalyzes the transfer of a ribosyl phosphate group from 5-phosphoribose 1-diphosphate to orotate, leading to the formation of orotidine monophosphate (OMP). In Ralstonia nicotianae (strain ATCC BAA-1114 / GMI1000) (Ralstonia solanacearum), this protein is Orotate phosphoribosyltransferase.